A 338-amino-acid chain; its full sequence is Phosphatidylglycerol--prolipoprotein diacylglyceryl transferase (338 aa).

4 helical membrane-spanning segments follow: residues 24–44 (WYGLMYLVAFGIAYFLFSYQV), 67–87 (LFIWGILGLILGARIFGTLVY), 115–135 (GFQGMSYHGGFIGGFLGVILW), and 141–161 (FKFAAVADLMAVSIPLGYTFG). Arg-162 lines the a 1,2-diacyl-sn-glycero-3-phospho-(1'-sn-glycerol) pocket. 3 helical membrane passes run 224-244 (PSQLYEAFFEGIILWLILWLL), 252-272 (GFLVCVYTLGYGFFRFFIEYF), and 304-324 (GQILCSLMILASLAAMLILYL).

This sequence belongs to the Lgt family.

It localises to the cell inner membrane. The catalysed reaction is L-cysteinyl-[prolipoprotein] + a 1,2-diacyl-sn-glycero-3-phospho-(1'-sn-glycerol) = an S-1,2-diacyl-sn-glyceryl-L-cysteinyl-[prolipoprotein] + sn-glycerol 1-phosphate + H(+). The protein operates within protein modification; lipoprotein biosynthesis (diacylglyceryl transfer). Catalyzes the transfer of the diacylglyceryl group from phosphatidylglycerol to the sulfhydryl group of the N-terminal cysteine of a prolipoprotein, the first step in the formation of mature lipoproteins. This Treponema denticola (strain ATCC 35405 / DSM 14222 / CIP 103919 / JCM 8153 / KCTC 15104) protein is Phosphatidylglycerol--prolipoprotein diacylglyceryl transferase.